The primary structure comprises 224 residues: Serum amyloid P-component (224 aa).

Positions 1–19 (MERLLLWVSVLASLPEAFA) are cleaved as a signal peptide. The Pentraxin (PTX) domain maps to 24–224 (TGKVFVFPRE…YVVIKPRVWS (201 aa)). An N-linked (GlcNAc...) asparagine glycan is attached at Asn51. A disulfide bond links Cys55 and Cys114. Ca(2+) is bound by residues Asp77, Asn78, Glu155, Gln156, Asp157, and Gln167.

It belongs to the pentraxin family. Homopentamer. Pentraxin (or pentaxin) have a discoid arrangement of 5 non-covalently bound subunits. The cofactor is Ca(2+).

Its subcellular location is the secreted. In Sus scrofa (Pig), this protein is Serum amyloid P-component (APCS).